A 759-amino-acid polypeptide reads, in one-letter code: Protein MTSS 1 (759 aa).

The 254-residue stretch at 1–254 (MEAVIEKECS…EQVILDLKGS (254 aa)) folds into the IMD domain. Residues 108–157 (LQEQMEEWKKVANQLDKDHAKEYKKARQEIKNKSSDTLKLQKKAKKVDAQ) are a coiled coil. A disordered region spans residues 259–309 (SYQTPPSSPSTTMSRKSSVCSSLNSVNSSDSRSSGSHSHSPSSHYRYRSSN). T262 bears the Phosphothreonine mark. Residues S265, S266, S275, and S326 each carry the phosphoserine modification. The interval 331-354 (QDAFQSKSPSPMPPEAANQLSNGF) is disordered. Phosphothreonine is present on T429. 2 disordered regions span residues 431-472 (QRRK…AATR) and 569-759 (KRPA…PRFS). T607 carries the phosphothreonine modification. Over residues 612–627 (PIPIKTPVIPVKTPTV) the composition is skewed to low complexity. 2 positions are modified to phosphoserine: S648 and S651. The segment covering 660–670 (GVSNIPSSLWS) has biased composition (polar residues). Pro residues predominate over residues 675–685 (VNPPLPGPKPS). The region spanning 731–748 (QGEDMLNAIRRGVKLKKT) is the WH2 domain.

Belongs to the MTSS family. As to quaternary structure, binds to actin. In terms of tissue distribution, strongly expressed in the developing neurons and skeletal and cardiac muscles in embryos. Strongly expressed also in liver, outer layers of the kidney, and in the Purkinje cells of the brain.

It localises to the cytoplasm. It is found in the cytoskeleton. In terms of biological role, inhibits the nucleation of actin filaments in vitro. The polypeptide is Protein MTSS 1 (Mus musculus (Mouse)).